Reading from the N-terminus, the 553-residue chain is Tether containing UBX domain for GLUT4 (553 aa).

Position 2 is an N-acetylalanine (Ala-2). Residues 182-202 (PGSLGSSASAGQAAASAPLPL) are compositionally biased toward low complexity. The interval 182 to 324 (PGSLGSSASA…REPVDREPVV (143 aa)) is disordered. Ser-184 is subject to Phosphoserine. The segment covering 206–217 (ELSRGDLSRPED) has biased composition (basic and acidic residues). Low complexity predominate over residues 260-280 (RPLTSSSAKLPKSLSSPGGPS). Phosphoserine is present on Ser-275. Basic and acidic residues predominate over residues 296-324 (EQERERDPQQEQERERPVDREPVDREPVV). The tract at residues 317–380 (PVDREPVVCH…LVTKAFREAQ (64 aa)) is interaction with GLUT4. Residues 386-462 (ERYPKVALRV…NLFPAALVHL (77 aa)) form the UBX domain. Residues 499–536 (GSPSPLPAPDPAPKSEPAAEEGALVPPEPIPGTAQPVK) are disordered. Residues Ser-500 and Ser-502 each carry the phosphoserine modification. The span at 502–512 (SPLPAPDPAPK) shows a compositional bias: pro residues.

As to quaternary structure, interacts with GLUT4. Interacts with VCPKMT. Interacts with VCP. As to expression, ubiquitous. Highly expressed in testis, heart, skeletal muscle and pancreas.

It is found in the endomembrane system. The protein resides in the endoplasmic reticulum-Golgi intermediate compartment membrane. Its subcellular location is the cytoplasm. It localises to the nucleus. Its function is as follows. Tethering protein that sequesters GLUT4-containing vesicles in the cytoplasm in the absence of insulin. Modulates the amount of GLUT4 that is available at the cell surface. Enhances VCP methylation catalyzed by VCPKMT. This is Tether containing UBX domain for GLUT4 (ASPSCR1) from Homo sapiens (Human).